The sequence spans 344 residues: MAYTLDDFDYDLPHELIAQTPIKQRDTSRLLVLDHQANTLEDKHFYDILDELHAGDAVVMNNSRVMPARLYGIKPETGGHVEVLLLHNVEGDVWETLMKPAKRLRVGTTVTFGDGQLTATVTEEREDGIRLIEFHYDGIFMEILEQLGETPLPPYIKEKLDDPDRYQTVYAKENGSAAAPTAGLHWTQELLDQVAAKGVKLVYITLHVGLGTFRPVEEANIEDHKMHSEFYRLDEAAAATLNEVRANGGRIIATGTTSIRTLETIGTKFKGEIKPDSGWTDIFIKPGYQWQVVNAFITNFHLPKSTLVMLVAAFTGRDQILNAYHHAIEEKYRFFSFGDAMFIK.

It belongs to the QueA family. As to quaternary structure, monomer.

Its subcellular location is the cytoplasm. The catalysed reaction is 7-aminomethyl-7-carbaguanosine(34) in tRNA + S-adenosyl-L-methionine = epoxyqueuosine(34) in tRNA + adenine + L-methionine + 2 H(+). It functions in the pathway tRNA modification; tRNA-queuosine biosynthesis. Transfers and isomerizes the ribose moiety from AdoMet to the 7-aminomethyl group of 7-deazaguanine (preQ1-tRNA) to give epoxyqueuosine (oQ-tRNA). The protein is S-adenosylmethionine:tRNA ribosyltransferase-isomerase of Levilactobacillus brevis (strain ATCC 367 / BCRC 12310 / CIP 105137 / JCM 1170 / LMG 11437 / NCIMB 947 / NCTC 947) (Lactobacillus brevis).